The sequence spans 378 residues: Quinolinate synthase (378 aa).

Residues His-59 and Ser-80 each contribute to the iminosuccinate site. Residue Cys-125 coordinates [4Fe-4S] cluster. Residues 151–153 and Ser-168 contribute to the iminosuccinate site; that span reads YAN. Cys-212 contacts [4Fe-4S] cluster. Iminosuccinate-binding positions include 238–240 and Thr-255; that span reads HPE. Cys-309 provides a ligand contact to [4Fe-4S] cluster.

It belongs to the quinolinate synthase family. Type 1 subfamily. [4Fe-4S] cluster serves as cofactor.

The protein localises to the cytoplasm. It carries out the reaction iminosuccinate + dihydroxyacetone phosphate = quinolinate + phosphate + 2 H2O + H(+). Its pathway is cofactor biosynthesis; NAD(+) biosynthesis; quinolinate from iminoaspartate: step 1/1. Its function is as follows. Catalyzes the condensation of iminoaspartate with dihydroxyacetone phosphate to form quinolinate. The protein is Quinolinate synthase of Burkholderia pseudomallei (strain 668).